Here is a 168-residue protein sequence, read N- to C-terminus: PAPRGTPQIEVTFEVDANGILNVKAEDKGTGKSEKITITNDKGRLSQEEIERMVREAEEFAEEDKKVKERIDARNGLETYVYNMKNQINDKDKLADKLESDEKEKIETAVKEALEWLDDNQSAEKEDYEEKLKEVEAVCNPIITAVYQRSGGASGGSSSSEEDGHDEL.

N-linked (GlcNAc...) asparagine glycosylation is present at Asn-120. The segment at 148-168 (QRSGGASGGSSSSEEDGHDEL) is disordered. The short motif at 165-168 (HDEL) is the Prevents secretion from ER element.

This sequence belongs to the heat shock protein 70 family.

Its subcellular location is the endoplasmic reticulum lumen. In terms of biological role, probably plays a role in facilitating the assembly of multimeric protein complexes inside the ER. The polypeptide is Luminal-binding protein 3 (BIP3) (Nicotiana tabacum (Common tobacco)).